Here is a 222-residue protein sequence, read N- to C-terminus: 3-dehydroquinate dehydratase (222 aa).

3-dehydroquinate contacts are provided by residues 32–34 (ELR) and R64. H117 serves as the catalytic Proton donor/acceptor. The active-site Schiff-base intermediate with substrate is the K143. R181 contacts 3-dehydroquinate.

This sequence belongs to the type-I 3-dehydroquinase family. In terms of assembly, homodimer.

It catalyses the reaction 3-dehydroquinate = 3-dehydroshikimate + H2O. It participates in metabolic intermediate biosynthesis; chorismate biosynthesis; chorismate from D-erythrose 4-phosphate and phosphoenolpyruvate: step 3/7. Involved in the third step of the chorismate pathway, which leads to the biosynthesis of aromatic amino acids. Catalyzes the cis-dehydration of 3-dehydroquinate (DHQ) and introduces the first double bond of the aromatic ring to yield 3-dehydroshikimate. The sequence is that of 3-dehydroquinate dehydratase from Aeropyrum pernix (strain ATCC 700893 / DSM 11879 / JCM 9820 / NBRC 100138 / K1).